A 293-amino-acid polypeptide reads, in one-letter code: Ribosomal protein L11 methyltransferase (293 aa).

S-adenosyl-L-methionine-binding residues include Thr145, Gly166, Asp188, and Asn230.

Belongs to the methyltransferase superfamily. PrmA family.

It is found in the cytoplasm. It carries out the reaction L-lysyl-[protein] + 3 S-adenosyl-L-methionine = N(6),N(6),N(6)-trimethyl-L-lysyl-[protein] + 3 S-adenosyl-L-homocysteine + 3 H(+). In terms of biological role, methylates ribosomal protein L11. The protein is Ribosomal protein L11 methyltransferase of Mannheimia succiniciproducens (strain KCTC 0769BP / MBEL55E).